We begin with the raw amino-acid sequence, 444 residues long: Ribosomal protein uS12 methylthiotransferase RimO (444 aa).

An MTTase N-terminal domain is found at 4–120 (KSAALVSLGC…LKSFIRDHEA (117 aa)). Residues Cys13, Cys49, Cys83, Cys157, Cys161, and Cys164 each coordinate [4Fe-4S] cluster. The Radical SAM core domain maps to 143–371 (VEGRSSAYVK…LELQRGISRR (229 aa)). One can recognise a TRAM domain in the interval 374–442 (ESLVGRVLPV…DYDVEAELLS (69 aa)).

This sequence belongs to the methylthiotransferase family. RimO subfamily. [4Fe-4S] cluster serves as cofactor.

Its subcellular location is the cytoplasm. It catalyses the reaction L-aspartate(89)-[ribosomal protein uS12]-hydrogen + (sulfur carrier)-SH + AH2 + 2 S-adenosyl-L-methionine = 3-methylsulfanyl-L-aspartate(89)-[ribosomal protein uS12]-hydrogen + (sulfur carrier)-H + 5'-deoxyadenosine + L-methionine + A + S-adenosyl-L-homocysteine + 2 H(+). Catalyzes the methylthiolation of an aspartic acid residue of ribosomal protein uS12. This chain is Ribosomal protein uS12 methylthiotransferase RimO, found in Syntrophobacter fumaroxidans (strain DSM 10017 / MPOB).